A 498-amino-acid chain; its full sequence is Cytochrome P450 monooxygenase ltmP (498 aa).

A signal peptide spans 1–21; it reads MLMLHAVPVGICLLLWYVVYG. The N-linked (GlcNAc...) asparagine glycan is linked to Asn-420. A heme-binding site is contributed by Cys-435.

The protein belongs to the cytochrome P450 family. It depends on heme as a cofactor.

Its pathway is secondary metabolite biosynthesis. Cytochrome P450 monooxygenase; part of the gene clusters that mediates the biosynthesis of lolitrems, indole-diterpene mycotoxins that are potent tremorgens in mammals, and are synthesized by clavicipitaceous fungal endophytes in association with their grass hosts. The geranylgeranyl diphosphate (GGPP) synthase ltmG is proposed to catalyze the first step in lolitrem biosynthesis. LtmG catalyzes a series of iterative condensations of isopentenyl diphosphate (IPP) with dimethylallyl diphosphate (DMAPP), geranyl diphosphate (GPP), and farnesyl diphosphate (FPP), to form GGPP. GGPP then condenses with indole-3-glycerol phosphate to form 3-geranylgeranylindole, an acyclic intermediate, to be incorporated into paxilline. Either ltmG or ltmC could be responsible for this step, as both are putative prenyl transferases. The FAD-dependent monooxygenase ltmM then catalyzes the epoxidation of the two terminal alkenes of the geranylgeranyl moiety, which is subsequently cyclized by ltmB, to paspaline. The cytochrome P450 monooxygenases ltmQ and ltmP can sequentially oxidize paspaline to terpendole E and terpendole F. Alternatively, ltmP converts paspaline to an intermediate which is oxidized by ltmQ to terpendole F. LtmF, ltmK, ltmE and ltmJ appear to be unique to the epichloe endophytes. The prenyltransferase ltmF is involved in the 27-hydroxyl-O-prenylation. The cytochrome P450 monooxygenase ltmK is required for the oxidative acetal ring formation. The multi-functional prenyltransferase ltmE is required for C20- and C21-prenylations of the indole ring of paspalanes and acts together with the cytochrome P450 monooxygenase ltmJ to yield lolitremanes by multiple oxidations and ring closures. The stereoisomer pairs of lolitriol and lolitrem N or lolitrem B and lolitrem F may be attributed to variations in the way in which ring closure can occur under the action of ltmJ. While the major product of this pathway is lolitrem B, the prenyl transferases and cytochrome P450 monooxygenases identified in this pathway have a remarkable versatility in their regio- and stereo-specificities to generate a diverse range of metabolites that are products of a metabolic grid rather than a linear pathway. The protein is Cytochrome P450 monooxygenase ltmP of Epichloe festucae var. lolii (Neotyphodium lolii).